The following is a 934-amino-acid chain: Complement component C6 (934 aa).

Residues 1–21 (MARRSVLYFILLNALINKGQA) form the signal peptide. 11 disulfides stabilise this stretch: Cys-22-Cys-61, Cys-24-Cys-65, Cys-35-Cys-73, Cys-39-Cys-78, Cys-82-Cys-117, Cys-93-Cys-127, Cys-96-Cys-133, Cys-140-Cys-151, Cys-146-Cys-164, Cys-158-Cys-173, and Cys-180-Cys-218. TSP type-1 domains follow at residues 22–79 (CFCD…QRCP) and 81–134 (NCLL…KLCK). C-linked (Man) tryptophan glycosylation is present at Trp-29. C-linked (Man) tryptophan; partial glycosylation occurs at Trp-32. Thr-38 carries an O-linked (Fuc...) threonine glycan. A glycan (C-linked (Man) tryptophan; partial) is linked at Trp-90. One can recognise an LDL-receptor class A domain in the interval 138 to 175 (ADCKNKFRCDSGRCIARKLECNGENDCGDNSDERDCGR). Residues Leu-156, Asn-159, Glu-161, Asp-163, Asp-169, and Glu-170 each coordinate Ca(2+). The 347-residue stretch at 176-522 (TKAVCTRKYN…EYAAKFDPCQ (347 aa)) folds into the MACPF domain. The chain crosses the membrane as a beta stranded span at residues 278–290 (SFSVPIFYSSKRS). The N-linked (GlcNAc...) asparagine glycan is linked to Asn-324. O-linked (Fuc...) threonine glycosylation occurs at Thr-392. 16 cysteine pairs are disulfide-bonded: Cys-399/Cys-420, Cys-499/Cys-623, Cys-521/Cys-570, Cys-523/Cys-539, Cys-526/Cys-541, Cys-543/Cys-552, Cys-577/Cys-611, Cys-589/Cys-601, Cys-644/Cys-686, Cys-672/Cys-699, Cys-704/Cys-746, Cys-732/Cys-761, Cys-773/Cys-823, Cys-784/Cys-801, Cys-786/Cys-837, and Cys-793/Cys-816. A beta stranded transmembrane segment spans residues 402–415 (IETKKRVLFAKKTK). Residues 523-553 (CAPCPNNGRPTLSGTECLCVCQSGTYGENCE) enclose the EGF-like domain. A TSP type-1 3 domain is found at 565-612 (DGQWGCWSSWSTCDATYKRSRTRECNNPAPQRGGKRCEGEKRQEEDCT). Residues Trp-568, Trp-571, and Trp-574 are each glycosylated (C-linked (Man) tryptophan; partial). 2 CCP regions span residues 611–688 (CTFS…RCLP) and 689–765 (DGTW…EKDT). 2 Sushi domains span residues 642–701 (SGCP…ECQR) and 702–763 (TECI…TCEK). Residues 642 to 934 (SGCPQPVPPE…EILHPGKCLA (293 aa)) are C5b-binding domain. A factor I module (FIM) 1 region spans residues 766 to 840 (LTKLKGHCQL…FLHIGSCQDG (75 aa)). One can recognise a Kazal-like 1 domain in the interval 780–839 (SGSECICMSPEEDCSHHSEDLCVFDTDSNDYFTSPACKFLAEKCLNNQQLHFLHIGSCQD). An N-linked (GlcNAc...) asparagine glycan is attached at Asn-855. The tract at residues 858–934 (KKESCGYDTC…EILHPGKCLA (77 aa)) is factor I module (FIM) 2. Disulfide bonds link Cys-862/Cys-873, Cys-867/Cys-919, Cys-880/Cys-897, Cys-882/Cys-932, and Cys-888/Cys-912. Residues 876–934 (STSKCVCLLPPQCFKGGNQLYCVKMGSSTSEKTLNICEVGTIRCANRKMEILHPGKCLA) enclose the Kazal-like 2 domain.

It belongs to the complement C6/C7/C8/C9 family. Component of the membrane attack complex (MAC), composed of complement C5b, C6, C7, C8A, C8B, C8G and multiple copies of the pore-forming subunit C9. Post-translationally, all cysteine residues are assumed to be cross-linked to one another. Individual modules containing an even number of conserved cysteine residues are supposed to have disulfide linkages only within the same module.

The protein resides in the secreted. It is found in the target cell membrane. Membrane attack complex (MAC) assembly is inhibited by CD59, thereby protecting self-cells from damage during complement activation. MAC assembly is also inhibited by clusterin (CLU) chaperones that inhibit polymerization of C9. Component of the membrane attack complex (MAC), a multiprotein complex activated by the complement cascade, which inserts into a target cell membrane and forms a pore, leading to target cell membrane rupture and cell lysis. The MAC is initiated by proteolytic cleavage of C5 into complement C5b in response to the classical, alternative, lectin and GZMK complement pathways. The complement pathways consist in a cascade of proteins that leads to phagocytosis and breakdown of pathogens and signaling that strengthens the adaptive immune system. Together with component C5b, involved in MAC complex assembly: complement C5b and C6 associate with the outer leaflet of target cell membrane, reducing the energy for membrane bending. This is Complement component C6 from Homo sapiens (Human).